We begin with the raw amino-acid sequence, 143 residues long: Small ribosomal subunit protein uS11c (143 aa).

It belongs to the universal ribosomal protein uS11 family. In terms of assembly, part of the 30S ribosomal subunit.

The protein resides in the plastid. It is found in the chloroplast. The chain is Small ribosomal subunit protein uS11c from Hordeum vulgare (Barley).